The sequence spans 143 residues: Large ribosomal subunit protein uL11 (143 aa).

The protein belongs to the universal ribosomal protein uL11 family. Part of the ribosomal stalk of the 50S ribosomal subunit. Interacts with L10 and the large rRNA to form the base of the stalk. L10 forms an elongated spine to which L12 dimers bind in a sequential fashion forming a multimeric L10(L12)X complex. Post-translationally, one or more lysine residues are methylated.

In terms of biological role, forms part of the ribosomal stalk which helps the ribosome interact with GTP-bound translation factors. In Psychrobacter cryohalolentis (strain ATCC BAA-1226 / DSM 17306 / VKM B-2378 / K5), this protein is Large ribosomal subunit protein uL11.